The chain runs to 260 residues: Acetylglutamate kinase (260 aa).

Substrate contacts are provided by residues 46 to 47 (GG), Arg-68, and Asn-160.

The protein belongs to the acetylglutamate kinase family. ArgB subfamily.

Its subcellular location is the cytoplasm. The catalysed reaction is N-acetyl-L-glutamate + ATP = N-acetyl-L-glutamyl 5-phosphate + ADP. It participates in amino-acid biosynthesis; L-arginine biosynthesis; N(2)-acetyl-L-ornithine from L-glutamate: step 2/4. Functionally, catalyzes the ATP-dependent phosphorylation of N-acetyl-L-glutamate. The sequence is that of Acetylglutamate kinase from Shewanella sp. (strain MR-4).